A 415-amino-acid chain; its full sequence is Mitogen-activated protein kinase MPS1 (415 aa).

In terms of domain architecture, Protein kinase spans 23–314 (YTVTKELGQG…VEQALEHPYL (292 aa)). ATP contacts are provided by residues 29–37 (LGQGAYGIV) and Lys-52. The disordered stretch occupies residues 363-394 (GAGGHGAPHAPQVPIPAGAGQGQWKAEDPRPQ).

This sequence belongs to the protein kinase superfamily. Ser/Thr protein kinase family. MAP kinase subfamily. As to quaternary structure, interacts with transcription factor MIG1. Interacts with transcription factor SWI6. Requires Mg(2+) as cofactor.

The catalysed reaction is L-seryl-[protein] + ATP = O-phospho-L-seryl-[protein] + ADP + H(+). It catalyses the reaction L-threonyl-[protein] + ATP = O-phospho-L-threonyl-[protein] + ADP + H(+). In terms of biological role, mitogen-activated protein kinase; part of the MCK1-MKK2-MPS1 MAP kinase (MAPK) signal transduction cascade that is essential for cell wall integrity and plant infection, but not for plant defense responses. Beside its role in pathogenesis, the MPS1 cascade is active in conidiation and cellular stress responses. Targets downstream of the MPS1-MAPK pathway include transcription factors MIG1 and SWI6, as well as GSK1 and MPG1. This chain is Mitogen-activated protein kinase MPS1, found in Pyricularia oryzae (strain 70-15 / ATCC MYA-4617 / FGSC 8958) (Rice blast fungus).